The chain runs to 309 residues: Porphobilinogen deaminase (309 aa).

S-(dipyrrolylmethanemethyl)cysteine is present on cysteine 243.

Belongs to the HMBS family. As to quaternary structure, monomer. The cofactor is dipyrromethane.

It carries out the reaction 4 porphobilinogen + H2O = hydroxymethylbilane + 4 NH4(+). It functions in the pathway porphyrin-containing compound metabolism; protoporphyrin-IX biosynthesis; coproporphyrinogen-III from 5-aminolevulinate: step 2/4. In terms of biological role, tetrapolymerization of the monopyrrole PBG into the hydroxymethylbilane pre-uroporphyrinogen in several discrete steps. In Deinococcus radiodurans (strain ATCC 13939 / DSM 20539 / JCM 16871 / CCUG 27074 / LMG 4051 / NBRC 15346 / NCIMB 9279 / VKM B-1422 / R1), this protein is Porphobilinogen deaminase (hemC).